The primary structure comprises 1004 residues: MVYSSSSMSNTNIRRRSVPITIQKSRMDGFAEANQLLSSALEQLDDIIRNGNSTSRSTTTIGSAGPTPIIKKSFRDLLPPPPALRSTFSPRIMENGHSNLAHKQHINDDIDNGNADDERSSREINRQWISTDWKHRTDLGSDGSSGVESPPSDLPTSSSSLFSPPRVYQEFVKAIDEQTMTERPDLETRLKIMQWVAGRTSPSPSMSTVSCPEYPELQDKLHRLAMARDSLQLQVSVLSEQVGAQKEKIKDLETVIALKRNNLTSTEELLQDKYHRIDECQELESKKMDLLAEVSSLKLRYATLEREKNETEKKLRLSQNEMDHVNQSMHGMVVQQQLAHHTNGHSSGGYMSPLREHRSEKNDDEMSQLRTAVQRLMADNEHKSLQINTLRNALDEQMRSRSQQEDFYASQRNYTDNFDVNAQIRRILMDEPSDSMSHSTSFPVSLSSTTSNGKGPRSTVQSSSSYNSSLSAVSPQHNWSSAGAGTPRQLHPIGGNQRVNNITSAQYCSPSPPAARQLAAELDELRRNGNEGANHNYSSASLPRGVGKASSTLTLPSKKLSVASGTSVGELGGSMSSVAQPTPKRNYRAQMNRWINEKLRRKRAVSAPNLVESDDEIARGRNLNNATSQSNLKNFSRERTRSSLRNIFSKLTRSTSQDQSNSFRRGSAARSTSTARLGSTNHLGTVSKRPPLSQFVDWRSEQLADWIAEIGYPQYMNEVSRHVRSGRHFLNMSMNEYEGVLNIKNPVHRKRVAILLRRIEEDIMEPANKWDVHQTLRWLDDIGLPQYKDVFAENVVDGPLLLSLTANDAVEMKVVNAHHYATLARSIQFLKKADFRFNAMEKLIDQNIVEKYPCPDVVVRWTHSATCEWLRKIDLAEFTQNLLFAGVPGALMIYEPSFTAESLAEILQMPPHKTLLRRHLTSHFNQLLGPKIIADKRDFLAAGNYPQISPTGRVKVVKKGFSLTRKKAKNEICLEPEELLCPQVLVHKYPTGAGDNSSFESSNV.

Composition is skewed to low complexity over residues 50–63 and 149–161; these read NGNS…TIGS and SPPS…SSSL. Disordered regions lie at residues 50-122 and 135-161; these read NGNS…RSSR and HRTD…SSSL. Coiled coils occupy residues 280–328 and 364–396; these read CQEL…VNQS and DEMS…ALDE. Disordered stretches follow at residues 341 to 366, 432 to 497, 528 to 550, and 648 to 686; these read HTNG…DDEM, PSDS…GGNQ, NGNE…GKAS, and FSKL…LGTV. Residues 434–453 show a composition bias toward polar residues; that stretch reads DSMSHSTSFPVSLSSTTSNG. The span at 458-474 shows a compositional bias: low complexity; sequence STVQSSSSYNSSLSAVS. Polar residues-rich tracts occupy residues 531-541 and 648-684; these read EGANHNYSSAS and FSKL…NHLG. SAM domains follow at residues 698–762, 770–833, and 858–930; these read WRSE…IEED, WDVH…LKKA, and VVRW…LLGP.

Belongs to the liprin family. Liprin-beta subfamily. As to expression, expressed in pharyngeal muscle, particularly posterior bulb, adjacent to the dorsal and ventral cord (but not in ventral cord neurons), and in body wall muscles.

Functionally, involved in the regulation of synaptic function at neuromuscular junctions. Together with the liprin-alpha protein syd-2, may play a role in regulating the structure of the neuronal region, called the active zone, from which synaptic vesicles send neurotransmitter signals across the synapse. Does not seem to be required for neuronal development. May regulate the disassembly of focal adhesions. Does not bind receptor-like tyrosine phosphatases type 2A. This is Liprin-beta homolog from Caenorhabditis elegans.